The chain runs to 206 residues: Twist-related protein 1 (206 aa).

Low complexity predominate over residues methionine 1–serine 18. Residues methionine 1–glutamate 109 are disordered. A compositionally biased stretch (basic residues) spans arginine 34–arginine 43. Composition is skewed to gly residues over residues glycine 48 to glutamate 65 and serine 78 to serine 103. The 52-residue stretch at threonine 112–leucine 163 folds into the bHLH domain. The sufficient for transactivation activity stretch occupies residues glutamine 165–arginine 195.

Efficient DNA binding requires dimerization with another bHLH protein. Homodimer or heterodimer with E proteins such as TCF3. ID1 binds preferentially to TCF3 but does not interact efficiently with TWIST1 so ID1 levels control the amount of TCF3 available to dimerize with TWIST1 and thus determine the type of dimer formed. Subset of mesodermal cells.

The protein localises to the nucleus. Its function is as follows. Acts as a transcriptional regulator. Inhibits myogenesis by sequestrating E proteins, inhibiting trans-activation by MEF2, and inhibiting DNA-binding by MYOD1 through physical interaction. This interaction probably involves the basic domains of both proteins. Also represses expression of pro-inflammatory cytokines such as TNFA and IL1B. Regulates cranial suture patterning and fusion. Activates transcription as a heterodimer with E proteins. Regulates gene expression differentially, depending on dimer composition. Homodimers induce expression of FGFR2 and POSTN while heterodimers repress FGFR2 and POSTN expression and induce THBS1 expression. Heterodimerization is also required for osteoblast differentiation. Represses the activity of the circadian transcriptional activator: NPAS2-BMAL1 heterodimer. This Mus musculus (Mouse) protein is Twist-related protein 1 (Twist1).